Consider the following 202-residue polypeptide: Putative 3-methyladenine DNA glycosylase (202 aa).

It belongs to the DNA glycosylase MPG family.

The polypeptide is Putative 3-methyladenine DNA glycosylase (Staphylococcus haemolyticus (strain JCSC1435)).